The chain runs to 501 residues: Bifunctional purine biosynthesis protein PurH (501 aa).

The MGS-like domain maps to 1 to 144 (MKKRALISVF…KNFKDVVVLS (144 aa)).

This sequence belongs to the PurH family.

The catalysed reaction is (6R)-10-formyltetrahydrofolate + 5-amino-1-(5-phospho-beta-D-ribosyl)imidazole-4-carboxamide = 5-formamido-1-(5-phospho-D-ribosyl)imidazole-4-carboxamide + (6S)-5,6,7,8-tetrahydrofolate. The enzyme catalyses IMP + H2O = 5-formamido-1-(5-phospho-D-ribosyl)imidazole-4-carboxamide. It functions in the pathway purine metabolism; IMP biosynthesis via de novo pathway; 5-formamido-1-(5-phospho-D-ribosyl)imidazole-4-carboxamide from 5-amino-1-(5-phospho-D-ribosyl)imidazole-4-carboxamide (10-formyl THF route): step 1/1. Its pathway is purine metabolism; IMP biosynthesis via de novo pathway; IMP from 5-formamido-1-(5-phospho-D-ribosyl)imidazole-4-carboxamide: step 1/1. In Clostridium perfringens (strain SM101 / Type A), this protein is Bifunctional purine biosynthesis protein PurH.